The chain runs to 249 residues: Coproheme decarboxylase (249 aa).

Fe-coproporphyrin III contacts are provided by residues R131, 145–149, H172, Q185, and S223; that span reads YPMDK. Residue Y145 is part of the active site.

Belongs to the ChdC family. Type 1 subfamily. Requires Fe-coproporphyrin III as cofactor.

The catalysed reaction is Fe-coproporphyrin III + 2 H2O2 + 2 H(+) = heme b + 2 CO2 + 4 H2O. It carries out the reaction Fe-coproporphyrin III + H2O2 + H(+) = harderoheme III + CO2 + 2 H2O. The enzyme catalyses harderoheme III + H2O2 + H(+) = heme b + CO2 + 2 H2O. It participates in porphyrin-containing compound metabolism; protoheme biosynthesis. Its function is as follows. Involved in coproporphyrin-dependent heme b biosynthesis. Catalyzes the decarboxylation of Fe-coproporphyrin III (coproheme) to heme b (protoheme IX), the last step of the pathway. The reaction occurs in a stepwise manner with a three-propionate intermediate. This is Coproheme decarboxylase from Shouchella clausii (strain KSM-K16) (Alkalihalobacillus clausii).